The sequence spans 295 residues: Ribosomal protein L11 methyltransferase (295 aa).

S-adenosyl-L-methionine is bound by residues Thr146, Gly167, Asp189, and Asn231.

The protein belongs to the methyltransferase superfamily. PrmA family.

The protein resides in the cytoplasm. The enzyme catalyses L-lysyl-[protein] + 3 S-adenosyl-L-methionine = N(6),N(6),N(6)-trimethyl-L-lysyl-[protein] + 3 S-adenosyl-L-homocysteine + 3 H(+). Functionally, methylates ribosomal protein L11. This Vibrio cholerae serotype O1 (strain M66-2) protein is Ribosomal protein L11 methyltransferase.